Consider the following 336-residue polypeptide: Dihydroorotate dehydrogenase (quinone) (336 aa).

Residues 62-66 (AGLDK) and Thr86 each bind FMN. Substrate is bound at residue Lys66. Substrate is bound at residue 111–115 (NRMGF). Residues Asn139 and Asn172 each contribute to the FMN site. Residue Asn172 coordinates substrate. Ser175 serves as the catalytic Nucleophile. Asn177 contacts substrate. Residues Lys217 and Thr245 each contribute to the FMN site. Residue 246-247 (NT) participates in substrate binding. FMN-binding positions include Gly268, Gly297, and 318–319 (YS).

The protein belongs to the dihydroorotate dehydrogenase family. Type 2 subfamily. As to quaternary structure, monomer. FMN is required as a cofactor.

The protein localises to the cell membrane. It carries out the reaction (S)-dihydroorotate + a quinone = orotate + a quinol. Its pathway is pyrimidine metabolism; UMP biosynthesis via de novo pathway; orotate from (S)-dihydroorotate (quinone route): step 1/1. Functionally, catalyzes the conversion of dihydroorotate to orotate with quinone as electron acceptor. The protein is Dihydroorotate dehydrogenase (quinone) of Yersinia enterocolitica serotype O:8 / biotype 1B (strain NCTC 13174 / 8081).